We begin with the raw amino-acid sequence, 93 residues long: Neutrophil cationic peptide 1 type A (93 aa).

Positions 1–19 are cleaved as a signal peptide; it reads MRTVPLFAACLLLTLMAQA. Residues 20–62 constitute a propeptide that is removed on maturation; that stretch reads EPLPRAADHSDTKMKGDREDHVAVISFWEEESTSLEDAGAGAG. Cystine bridges form between Cys65/Cys93, Cys67/Cys82, and Cys72/Cys92.

The protein belongs to the alpha-defensin family.

Its subcellular location is the secreted. In terms of biological role, has antibiotic, anti-fungi and antiviral activity. The chain is Neutrophil cationic peptide 1 type A from Cavia porcellus (Guinea pig).